We begin with the raw amino-acid sequence, 207 residues long: Ankyrin repeat-containing protein P1E11.10 (207 aa).

ANK repeat units follow at residues 36 to 65 and 69 to 98; these read NGYT…DINI and DGET…TVKN.

It is found in the cytoplasm. The protein resides in the nucleus. This Schizosaccharomyces pombe (strain 972 / ATCC 24843) (Fission yeast) protein is Ankyrin repeat-containing protein P1E11.10.